A 96-amino-acid polypeptide reads, in one-letter code: Class I hydrophobin 3 (96 aa).

Residues 1–18 form the signal peptide; that stretch reads MQFAKIASVLAMAAAAVA. Intrachain disulfides connect Cys-43-Cys-72, Cys-51-Cys-66, Cys-52-Cys-57, and Cys-73-Cys-92.

Belongs to the fungal hydrophobin family.

The protein localises to the secreted. It localises to the cell wall. Aerial growth, conidiation, and dispersal of filamentous fungi in the environment rely upon a capability of their secreting small amphipathic proteins called hydrophobins (HPBs) with low sequence identity. Class I can self-assemble into an outermost layer of rodlet bundles on aerial cell surfaces, conferring cellular hydrophobicity that supports fungal growth, development and dispersal; whereas Class II form highly ordered films at water-air interfaces through intermolecular interactions but contribute nothing to the rodlet structure. Does not seem to be important for the ability to cause seedling disease. The protein is Class I hydrophobin 3 of Gibberella moniliformis (Maize ear and stalk rot fungus).